A 219-amino-acid chain; its full sequence is RPA-interacting protein (219 aa).

Serine 18 carries the post-translational modification Phosphoserine. A Glycyl lysine isopeptide (Lys-Gly) (interchain with G-Cter in SUMO); in isoform 2 cross-link involves residue lysine 121. The RIP-type zinc-finger motif lies at cysteine 137–cysteine 212. The mediates nuclear export stretch occupies residues serine 164–isoleucine 180.

In terms of assembly, interacts with the RPA1 subunit of RPA complex. Post-translationally, sumoylated. Sumoylation is required for localization in the nuclear PML body and transport of RPA complex in PML body. Upon UV irradiation and during S phase, it is desumoylated, releasing RPA complex that is translocated to sites of DNA damage. Sumoylation takes place at different Lys residues. Variant 'Lys-103' adds a sumoylation site and increases total sumoylation levels. Widely expressed. Expressed in pancreas, kidney, muscle, liver, lung, placenta, brain, heart, leukocytes, colon, intestine, ovary, testis, prostate, thymus and spleen.

The protein localises to the cytoplasm. The protein resides in the nucleus. Its subcellular location is the PML body. Mediates the import of RPA complex into the nucleus, possibly via some interaction with importin beta. Isoform 2 is sumoylated and mediates the localization of RPA complex into the PML body of the nucleus, thereby participating in RPA function in DNA metabolism. This Homo sapiens (Human) protein is RPA-interacting protein (RPAIN).